Here is a 611-residue protein sequence, read N- to C-terminus: MKRLPNNPGVYRMFNSDGGVLYVGKARNLKKRVSNYARGIGHSNRITRMIRETVTMEFVVTRTETEALLLEANLIKRLRPRFNVLMRDDKSFPYILLTGGHRAPGIFKHRGARSRKGDYFGPFASAGAVGRTINALQRAFLLRTCTDSVFETRTRPCLLYQIKRCSAPCTYEISDEDYAGLVAEAKAFLSGKSQSVKDHLAAAMQAASADLDFEHAAVYRDRLAALSHVQSHQGINPQTVEEADVFAIHQEGGMTCIQVFFFRTGQNWGNRAYFPKADSSLGPAEVLGAFLSQFYDDKPCPKLVLLSETVEEQSLITEALSTRAGHKVQVSVPQRGEKKELVQHALTNAREALGRRLAETSSQARLLQGLAETFGLPRAPRRIEVYDNSHIMGTNAVGGMIVAGPEGFVKNQYRKFNIRSTDITPGDDFGMMREVIERRFSRLVKEHGTPAGEVKNPDAFPAWPDVILIDGGQGQVGAVRQILGEMGISDLVTAIGIAKGVDREAGRERFFMEGKQPFTLPPRDPVLYFIQRLRDEAHRFAIGTHRARRKKEIVRNPLDEIAGIGPTRKRALLHHFGTAKAVSRAAVEDLMQIDGISEAMARAIHDHFRDK.

In terms of domain architecture, GIY-YIG spans 6-84 (NNPGVYRMFN…IKRLRPRFNV (79 aa)). The region spanning 194–229 (QSVKDHLAAAMQAASADLDFEHAAVYRDRLAALSHV) is the UVR domain.

This sequence belongs to the UvrC family. As to quaternary structure, interacts with UvrB in an incision complex.

The protein localises to the cytoplasm. Its function is as follows. The UvrABC repair system catalyzes the recognition and processing of DNA lesions. UvrC both incises the 5' and 3' sides of the lesion. The N-terminal half is responsible for the 3' incision and the C-terminal half is responsible for the 5' incision. The polypeptide is UvrABC system protein C (Brucella abortus (strain 2308)).